A 304-amino-acid polypeptide reads, in one-letter code: Acetyl-coenzyme A carboxylase carboxyl transferase subunit beta (304 aa).

Positions 23-292 (VWTKCDSCGQ…PNPEAPREGV (270 aa)) constitute a CoA carboxyltransferase N-terminal domain. Cys27, Cys30, Cys46, and Cys49 together coordinate Zn(2+). The C4-type zinc-finger motif lies at 27–49 (CDSCGQVLYRAELERNLEVCPKC). Positions 284-304 (NPEAPREGVVVPPVPDQEPEA) are disordered. The segment covering 295–304 (PPVPDQEPEA) has biased composition (pro residues).

This sequence belongs to the AccD/PCCB family. Acetyl-CoA carboxylase is a heterohexamer composed of biotin carboxyl carrier protein (AccB), biotin carboxylase (AccC) and two subunits each of ACCase subunit alpha (AccA) and ACCase subunit beta (AccD). Zn(2+) is required as a cofactor.

It localises to the cytoplasm. The catalysed reaction is N(6)-carboxybiotinyl-L-lysyl-[protein] + acetyl-CoA = N(6)-biotinyl-L-lysyl-[protein] + malonyl-CoA. It participates in lipid metabolism; malonyl-CoA biosynthesis; malonyl-CoA from acetyl-CoA: step 1/1. Functionally, component of the acetyl coenzyme A carboxylase (ACC) complex. Biotin carboxylase (BC) catalyzes the carboxylation of biotin on its carrier protein (BCCP) and then the CO(2) group is transferred by the transcarboxylase to acetyl-CoA to form malonyl-CoA. The chain is Acetyl-coenzyme A carboxylase carboxyl transferase subunit beta from Escherichia coli O139:H28 (strain E24377A / ETEC).